Reading from the N-terminus, the 123-residue chain is uncharacterized protein (123 aa).

A signal peptide spans 1–20 (MARTLALRASAGLVAGMAMA).

This is an uncharacterized protein from Mycobacterium bovis (strain ATCC BAA-935 / AF2122/97).